The following is a 227-amino-acid chain: GTPase ERas (227 aa).

Polar residues predominate over residues Met-1–Thr-19. The disordered stretch occupies residues Met-1–Ser-25. Position 48 to 55 (Gly-48 to Ser-55) interacts with GTP. The Effector region signature appears at His-70–Tyr-78. GTP is bound by residues Asp-95 to Gln-99 and Asn-151 to Asp-154. Residues Cys-220 and Cys-222 are each lipidated (S-palmitoyl cysteine). Residue Cys-224 is modified to Cysteine methyl ester. Residue Cys-224 is the site of S-farnesyl cysteine attachment. The propeptide at Ser-225–Ala-227 is removed in mature form.

The protein belongs to the small GTPase superfamily. Ras family. As to quaternary structure, interacts with PIK3CD. In terms of tissue distribution, expressed in several undifferentiated mouse embryonic stem cell lines.

The protein localises to the cell membrane. It carries out the reaction GTP + H2O = GDP + phosphate + H(+). With respect to regulation, alternates between an inactive form bound to GDP and an active form bound to GTP. Activated by a guanine nucleotide-exchange factor (GEF) and inactivated by a GTPase-activating protein (GAP). Functionally, ras proteins bind GDP/GTP and possess intrinsic GTPase activity. Plays an important role in the tumor-like growth properties of embryonic stem cells. In Mus musculus (Mouse), this protein is GTPase ERas (Eras).